We begin with the raw amino-acid sequence, 546 residues long: Probable protein kinase UbiB (546 aa).

Residues Asp124 to Leu502 form the Protein kinase domain. Residues Leu130–Val138 and Lys153 each bind ATP. Catalysis depends on Asp288, which acts as the Proton acceptor. Transmembrane regions (helical) follow at residues Tyr501–Pro521 and Glu522–Trp542.

It belongs to the ABC1 family. UbiB subfamily.

Its subcellular location is the cell inner membrane. It participates in cofactor biosynthesis; ubiquinone biosynthesis [regulation]. Functionally, is probably a protein kinase regulator of UbiI activity which is involved in aerobic coenzyme Q (ubiquinone) biosynthesis. The protein is Probable protein kinase UbiB of Klebsiella pneumoniae (strain 342).